Consider the following 299-residue polypeptide: Sulfate adenylyltransferase subunit 2 (299 aa).

Positions 276–299 are disordered; the sequence is EREGRVIDHDSAGSMEKKKREGYF.

Belongs to the PAPS reductase family. CysD subfamily. In terms of assembly, heterodimer composed of CysD, the smaller subunit, and CysN.

It carries out the reaction sulfate + ATP + H(+) = adenosine 5'-phosphosulfate + diphosphate. The protein operates within sulfur metabolism; hydrogen sulfide biosynthesis; sulfite from sulfate: step 1/3. With CysN forms the ATP sulfurylase (ATPS) that catalyzes the adenylation of sulfate producing adenosine 5'-phosphosulfate (APS) and diphosphate, the first enzymatic step in sulfur assimilation pathway. APS synthesis involves the formation of a high-energy phosphoric-sulfuric acid anhydride bond driven by GTP hydrolysis by CysN coupled to ATP hydrolysis by CysD. The polypeptide is Sulfate adenylyltransferase subunit 2 (Pseudoalteromonas translucida (strain TAC 125)).